The chain runs to 344 residues: GTP 3',8-cyclase (344 aa).

One can recognise a Radical SAM core domain in the interval 19 to 239 (PFGRTIDYLR…ANYTLTDLPD (221 aa)). R28 contributes to the GTP binding site. [4Fe-4S] cluster is bound by residues C35 and C39. Y41 provides a ligand contact to S-adenosyl-L-methionine. Residue C42 participates in [4Fe-4S] cluster binding. R77 is a GTP binding site. G81 contacts S-adenosyl-L-methionine. T111 is a binding site for GTP. S135 is a binding site for S-adenosyl-L-methionine. K171 contributes to the GTP binding site. Residue M205 coordinates S-adenosyl-L-methionine. 2 residues coordinate [4Fe-4S] cluster: C268 and C271. 273–275 (RVR) serves as a coordination point for GTP. C285 contributes to the [4Fe-4S] cluster binding site.

It belongs to the radical SAM superfamily. MoaA family. As to quaternary structure, monomer and homodimer. It depends on [4Fe-4S] cluster as a cofactor.

It carries out the reaction GTP + AH2 + S-adenosyl-L-methionine = (8S)-3',8-cyclo-7,8-dihydroguanosine 5'-triphosphate + 5'-deoxyadenosine + L-methionine + A + H(+). It functions in the pathway cofactor biosynthesis; molybdopterin biosynthesis. Its function is as follows. Catalyzes the cyclization of GTP to (8S)-3',8-cyclo-7,8-dihydroguanosine 5'-triphosphate. The chain is GTP 3',8-cyclase from Rhodopseudomonas palustris (strain ATCC BAA-98 / CGA009).